A 126-amino-acid chain; its full sequence is Sperm-specific H1/protamine-like protein type 2 (126 aa).

Residues 5-84 (KKPTTLSMIV…GATGSFRVGK (80 aa)) form the H15 domain. Positions 74–126 (SGATGSFRVGKAPASPKKAKKAKSPKKKSSKKSKNKSNNAKAKKSPKKKADSN) are disordered. A compositionally biased stretch (basic residues) spans 90 to 120 (KKAKKAKSPKKKSSKKSKNKSNNAKAKKSPK).

In terms of processing, OE2 and OE3 are produced by post-translational cleavage of a common precursor. In terms of tissue distribution, sperm.

The protein localises to the nucleus. It is found in the chromosome. Linker histones are implicated in chromatin remodeling and/or transcriptional regulation during spermiogenesis, the process of spermatid maturation into spermatozoa. Protamines substitute for histones in the chromatin of sperm during the haploid phase of spermatogenesis. They compact sperm DNA into a highly condensed, stable and inactive complex. The sequence is that of Sperm-specific H1/protamine-like protein type 2 from Ostrea edulis (Native oyster).